Reading from the N-terminus, the 417-residue chain is Serine hydroxymethyltransferase (417 aa).

The residue at position 54 (lysine 54) is an N6-acetyllysine. (6S)-5,6,7,8-tetrahydrofolate-binding positions include leucine 121 and 125 to 127 (GHL). Residue lysine 229 is modified to N6-(pyridoxal phosphate)lysine. Residues lysine 250, lysine 285, and lysine 354 each carry the N6-acetyllysine modification. Residue 355-357 (SPF) participates in (6S)-5,6,7,8-tetrahydrofolate binding. The residue at position 375 (lysine 375) is an N6-acetyllysine.

The protein belongs to the SHMT family. As to quaternary structure, homodimer. Pyridoxal 5'-phosphate is required as a cofactor.

It is found in the cytoplasm. It catalyses the reaction (6R)-5,10-methylene-5,6,7,8-tetrahydrofolate + glycine + H2O = (6S)-5,6,7,8-tetrahydrofolate + L-serine. The protein operates within one-carbon metabolism; tetrahydrofolate interconversion. It functions in the pathway amino-acid biosynthesis; glycine biosynthesis; glycine from L-serine: step 1/1. Catalyzes the reversible interconversion of serine and glycine with tetrahydrofolate (THF) serving as the one-carbon carrier. This reaction serves as the major source of one-carbon groups required for the biosynthesis of purines, thymidylate, methionine, and other important biomolecules. Also exhibits THF-independent aldolase activity toward beta-hydroxyamino acids, producing glycine and aldehydes, via a retro-aldol mechanism. In Shigella sonnei (strain Ss046), this protein is Serine hydroxymethyltransferase.